A 257-amino-acid chain; its full sequence is 3-deoxy-manno-octulosonate cytidylyltransferase (257 aa).

The protein belongs to the KdsB family.

It localises to the cytoplasm. The enzyme catalyses 3-deoxy-alpha-D-manno-oct-2-ulosonate + CTP = CMP-3-deoxy-beta-D-manno-octulosonate + diphosphate. It functions in the pathway nucleotide-sugar biosynthesis; CMP-3-deoxy-D-manno-octulosonate biosynthesis; CMP-3-deoxy-D-manno-octulosonate from 3-deoxy-D-manno-octulosonate and CTP: step 1/1. It participates in bacterial outer membrane biogenesis; lipopolysaccharide biosynthesis. In terms of biological role, activates KDO (a required 8-carbon sugar) for incorporation into bacterial lipopolysaccharide in Gram-negative bacteria. The protein is 3-deoxy-manno-octulosonate cytidylyltransferase of Xylella fastidiosa (strain 9a5c).